Consider the following 424-residue polypeptide: MKGRVRIRGIYATALTSIFSSLSYEIVQQSVEIAERFMREVNNLPADITIKDFEYDRGKIIVMGNGTIEEDLHDVFKYSFHWKSPIKLYSVIEADESCTYGNFKVEPCLEEGIVIKPPYDGKIVLSETKAVSKYAMVWRGKGVTTFSEHINNEGERLRLLTLSSPLNRKGYNVKWRSNAKYATLNELKEDLERLVLRYENREFRDQGEDFYLITLSLPDKLHLDEVRKSIVNTVKYHHMLKLSYNREVDSLEKDKEGSPVKLLEALISDFMKIEHIKADGKAIYLRGGKVIEKEVNNDGYRITLRREINGNGVLDGIGKRIENGDYDIVEYNSDKWYQIHRYYSGIDNSLKGIYINISTPPELLKGKIRYLDLEIDIAIRDSEIIVLDEDELNKKSIYMHSSLVNKAKEVANYLIDCIQQNKLI.

Belongs to the FAU-1 family.

In terms of biological role, probable RNase involved in rRNA stability through maturation and/or degradation of precursor rRNAs. Binds to RNA in loop regions with AU-rich sequences. In Saccharolobus islandicus (strain L.S.2.15 / Lassen #1) (Sulfolobus islandicus), this protein is Probable ribonuclease FAU-1.